We begin with the raw amino-acid sequence, 147 residues long: 3-hydroxyacyl-[acyl-carrier-protein] dehydratase FabZ (147 aa).

His51 is a catalytic residue.

Belongs to the thioester dehydratase family. FabZ subfamily.

It localises to the cytoplasm. It catalyses the reaction a (3R)-hydroxyacyl-[ACP] = a (2E)-enoyl-[ACP] + H2O. In terms of biological role, involved in unsaturated fatty acids biosynthesis. Catalyzes the dehydration of short chain beta-hydroxyacyl-ACPs and long chain saturated and unsaturated beta-hydroxyacyl-ACPs. In Anaplasma marginale (strain Florida), this protein is 3-hydroxyacyl-[acyl-carrier-protein] dehydratase FabZ.